The primary structure comprises 248 residues: 14-3-3 protein homolog 2 (248 aa).

This sequence belongs to the 14-3-3 family.

The polypeptide is 14-3-3 protein homolog 2 (Echinococcus multilocularis (Fox tapeworm)).